The chain runs to 311 residues: Olfactory receptor 10G4 (311 aa).

Residues M1–A23 lie on the Extracellular side of the membrane. N-linked (GlcNAc...) asparagine glycosylation is present at N3. A helical transmembrane segment spans residues L24–L44. Topologically, residues L45 to H52 are cytoplasmic. A helical membrane pass occupies residues L53–T73. Topologically, residues V74–A98 are extracellular. A disulfide bridge connects residues C96 and C188. The chain crosses the membrane as a helical span at residues Q99–Y119. The Cytoplasmic portion of the chain corresponds to D120–S138. The chain crosses the membrane as a helical span at residues R139–T159. The Extracellular portion of the chain corresponds to I160–M196. Residues V197–S216 traverse the membrane as a helical segment. The Cytoplasmic portion of the chain corresponds to Y217–A236. A helical membrane pass occupies residues F237–I257. The Extracellular portion of the chain corresponds to Y258–D268. Residues G269–L289 form a helical membrane-spanning segment. Residues R290–K311 lie on the Cytoplasmic side of the membrane.

This sequence belongs to the G-protein coupled receptor 1 family.

Its subcellular location is the cell membrane. Odorant receptor. The chain is Olfactory receptor 10G4 (OR10G4) from Homo sapiens (Human).